Here is a 430-residue protein sequence, read N- to C-terminus: Trigger factor (430 aa).

In terms of domain architecture, PPIase FKBP-type spans 163-248; that stretch reads GNIAIIDFKG…IKDIKVKELP (86 aa).

This sequence belongs to the FKBP-type PPIase family. Tig subfamily.

It is found in the cytoplasm. The catalysed reaction is [protein]-peptidylproline (omega=180) = [protein]-peptidylproline (omega=0). In terms of biological role, involved in protein export. Acts as a chaperone by maintaining the newly synthesized protein in an open conformation. Functions as a peptidyl-prolyl cis-trans isomerase. In Clostridium botulinum (strain ATCC 19397 / Type A), this protein is Trigger factor.